The sequence spans 189 residues: B3 domain-containing protein At2g32645 (189 aa).

Residues F33–I133 constitute a DNA-binding region (TF-B3).

It is found in the nucleus. This Arabidopsis thaliana (Mouse-ear cress) protein is B3 domain-containing protein At2g32645.